A 285-amino-acid chain; its full sequence is Bifunctional protein FolD (285 aa).

NADP(+) contacts are provided by residues 166–168 and isoleucine 232; that span reads GAS.

This sequence belongs to the tetrahydrofolate dehydrogenase/cyclohydrolase family. In terms of assembly, homodimer.

The catalysed reaction is (6R)-5,10-methylene-5,6,7,8-tetrahydrofolate + NADP(+) = (6R)-5,10-methenyltetrahydrofolate + NADPH. It carries out the reaction (6R)-5,10-methenyltetrahydrofolate + H2O = (6R)-10-formyltetrahydrofolate + H(+). It participates in one-carbon metabolism; tetrahydrofolate interconversion. With respect to regulation, the NAD(+)-dependent dehydrogenase is activated by inorganic phosphate. Functionally, catalyzes the oxidation of 5,10-methylenetetrahydrofolate to 5,10-methenyltetrahydrofolate and then the hydrolysis of 5,10-methenyltetrahydrofolate to 10-formyltetrahydrofolate. This chain is Bifunctional protein FolD, found in Photobacterium phosphoreum.